A 124-amino-acid polypeptide reads, in one-letter code: Urease subunit beta (124 aa).

The protein belongs to the urease beta subunit family. As to quaternary structure, heterotrimer of UreA (gamma), UreB (beta) and UreC (alpha) subunits. Three heterotrimers associate to form the active enzyme.

It localises to the cytoplasm. The catalysed reaction is urea + 2 H2O + H(+) = hydrogencarbonate + 2 NH4(+). The protein operates within nitrogen metabolism; urea degradation; CO(2) and NH(3) from urea (urease route): step 1/1. In Ureaplasma urealyticum serovar 10 (strain ATCC 33699 / Western), this protein is Urease subunit beta.